We begin with the raw amino-acid sequence, 186 residues long: Small ribosomal subunit protein uS5 (186 aa).

The S5 DRBM domain occupies Phe18–Val81.

It belongs to the universal ribosomal protein uS5 family. As to quaternary structure, part of the 30S ribosomal subunit. Contacts proteins S4 and S8.

Its function is as follows. With S4 and S12 plays an important role in translational accuracy. Located at the back of the 30S subunit body where it stabilizes the conformation of the head with respect to the body. This is Small ribosomal subunit protein uS5 from Parvibaculum lavamentivorans (strain DS-1 / DSM 13023 / NCIMB 13966).